A 101-amino-acid chain; its full sequence is Small ribosomal subunit protein uS17 (101 aa).

Belongs to the universal ribosomal protein uS17 family. Part of the 30S ribosomal subunit.

One of the primary rRNA binding proteins, it binds specifically to the 5'-end of 16S ribosomal RNA. In Leifsonia xyli subsp. xyli (strain CTCB07), this protein is Small ribosomal subunit protein uS17.